A 325-amino-acid chain; its full sequence is Formimidoylglutamase (325 aa).

Residues H130, D156, H158, D160, C244, and D246 each coordinate Mn(2+).

It belongs to the arginase family. Mn(2+) is required as a cofactor.

The catalysed reaction is N-formimidoyl-L-glutamate + H2O = formamide + L-glutamate. The protein operates within amino-acid degradation; L-histidine degradation into L-glutamate; L-glutamate from N-formimidoyl-L-glutamate (hydrolase route): step 1/1. Catalyzes the conversion of N-formimidoyl-L-glutamate to L-glutamate and formamide. In Geobacillus sp. (strain WCH70), this protein is Formimidoylglutamase.